We begin with the raw amino-acid sequence, 131 residues long: Protein GLUTAMINE DUMPER 5 (131 aa).

Residues 1–34 lie on the Extracellular side of the membrane; sequence MRQFPSIRGNINEKMMTTMVESQTRSPWRTPVPY. A helical transmembrane segment spans residues 35 to 55; sequence LFGGLAAMLGLIAFALLLLAC. Residues 56–131 are Cytoplasmic-facing; it reads SYWRLSRQTE…GESKVTEENH (76 aa). A VIMAG motif is present at residues 88–92; sequence VIMAG.

Belongs to the GLUTAMINE DUMPER 1 (TC 9.B.60) family. Expressed in the vascular tissues. Also detected in guard cells.

The protein localises to the membrane. Its function is as follows. Probable subunit of an amino acid transporter involved in the regulation of the amino acid metabolism. Stimulates amino acid export by activating nonselective amino acid facilitators. The chain is Protein GLUTAMINE DUMPER 5 (GDU5) from Arabidopsis thaliana (Mouse-ear cress).